The primary structure comprises 202 residues: PITH domain-containing protein 1 (202 aa).

The PITH domain maps to Ser-11–Pro-184.

Belongs to the PITHD1 family.

The polypeptide is PITH domain-containing protein 1 (Dictyostelium discoideum (Social amoeba)).